We begin with the raw amino-acid sequence, 273 residues long: HMP-PP phosphatase (273 aa).

The active-site Nucleophile is the D8. D8, D10, and D212 together coordinate Mg(2+).

This sequence belongs to the HAD-like hydrolase superfamily. Cof family. Mg(2+) serves as cofactor.

It catalyses the reaction 4-amino-2-methyl-5-(diphosphooxymethyl)pyrimidine + H2O = 4-amino-2-methyl-5-(phosphooxymethyl)pyrimidine + phosphate + H(+). Its function is as follows. Catalyzes the hydrolysis of 4-amino-2-methyl-5-hydroxymethylpyrimidine pyrophosphate (HMP-PP) to 4-amino-2-methyl-5-hydroxymethylpyrimidine phosphate (HMP-P). The sequence is that of HMP-PP phosphatase from Yersinia pestis bv. Antiqua (strain Antiqua).